The following is a 568-amino-acid chain: Protein adenylyltransferase SelO, mitochondrial (568 aa).

Positions 120, 122, 123, 144, 156, 157, 208, and 215 each coordinate ATP. The active-site Proton acceptor is the D287. 2 residues coordinate Mg(2+): N288 and D297. D297 is a binding site for ATP.

This sequence belongs to the SELO family. It depends on Mg(2+) as a cofactor. Forms probably one or more intrachain disulfide bridges.

It localises to the mitochondrion. It carries out the reaction L-tyrosyl-[protein] + ATP = O-(5'-adenylyl)-L-tyrosyl-[protein] + diphosphate. Catalyzes the transfer of adenosine 5'-monophosphate (AMP) to Tyr residues of target mitochondrial proteins (AMPylation). Involved in redox homeostasis by regulating the cellular response to oxidative stress. Regulates protein S-glutathionylation levels possibly by AMPylation of deglutathionylation enzymes such as glutaredoxins. The sequence is that of Protein adenylyltransferase SelO, mitochondrial from Schizosaccharomyces pombe (strain 972 / ATCC 24843) (Fission yeast).